The sequence spans 256 residues: Protein RGF1 INDUCIBLE TRANSCRIPTION FACTOR 1 (256 aa).

The segment at 21–59 (CPYHETAKKNERNVCCLDCCTSLCPHCVPSHRFHRLLQV) adopts a B box-type zinc-finger fold.

In terms of tissue distribution, expressed predominantly in root meristematic zones.

It localises to the nucleus. Probable transcription factor that plays a central role in mediating RGF1 hormone peptide signaling leading to the production of reactive oxygen species (ROS) in roots to modulate meristem size and root growth, probably via oxidative post-translational modification of the transcription factor PLETHORA (e.g. PLT1 and PLT2). The polypeptide is Protein RGF1 INDUCIBLE TRANSCRIPTION FACTOR 1 (Arabidopsis thaliana (Mouse-ear cress)).